The primary structure comprises 354 residues: Fe(3+) ions import ATP-binding protein FbpC (354 aa).

The ABC transporter domain maps to 4-236 (LELHAVHKSF…PRDAQTALFL (233 aa)). Position 36–43 (36–43 (GPSGSGKT)) interacts with ATP.

Belongs to the ABC transporter superfamily. Fe(3+) ion importer (TC 3.A.1.10) family. As to quaternary structure, the complex is composed of two ATP-binding proteins (FbpC), two transmembrane proteins (FbpB) and a solute-binding protein (FbpA).

It localises to the cell inner membrane. It carries out the reaction Fe(3+)(out) + ATP + H2O = Fe(3+)(in) + ADP + phosphate + H(+). Functionally, part of the ABC transporter complex FbpABC involved in Fe(3+) ions import. Responsible for energy coupling to the transport system. This chain is Fe(3+) ions import ATP-binding protein FbpC, found in Pseudomonas fluorescens (strain ATCC BAA-477 / NRRL B-23932 / Pf-5).